The chain runs to 233 residues: 28 kDa ribonucleoprotein, chloroplastic (233 aa).

Polar residues predominate over residues 1–16 (CVAQTSEWEQEGSTNA). The tract at residues 1–52 (CVAQTSEWEQEGSTNAVLEGESDPEGAVSWGSETQVSDEGGVEGGQGFSEPP) is disordered. RRM domains are found at residues 55–133 (AKLF…KAAP) and 149–227 (CRVY…VAEE).

It is found in the plastid. Its subcellular location is the chloroplast. In terms of biological role, probably involved in the 3'-end processing of chloroplast mRNA's. This Spinacia oleracea (Spinach) protein is 28 kDa ribonucleoprotein, chloroplastic.